Here is a 366-residue protein sequence, read N- to C-terminus: tRNA/tmRNA (uracil-C(5))-methyltransferase (366 aa).

S-adenosyl-L-methionine-binding residues include glutamine 190, tyrosine 218, asparagine 223, glutamate 239, and aspartate 299. Cysteine 324 (nucleophile) is an active-site residue. The active-site Proton acceptor is glutamate 358.

The protein belongs to the class I-like SAM-binding methyltransferase superfamily. RNA M5U methyltransferase family. TrmA subfamily.

It catalyses the reaction uridine(54) in tRNA + S-adenosyl-L-methionine = 5-methyluridine(54) in tRNA + S-adenosyl-L-homocysteine + H(+). It carries out the reaction uridine(341) in tmRNA + S-adenosyl-L-methionine = 5-methyluridine(341) in tmRNA + S-adenosyl-L-homocysteine + H(+). Dual-specificity methyltransferase that catalyzes the formation of 5-methyluridine at position 54 (m5U54) in all tRNAs, and that of position 341 (m5U341) in tmRNA (transfer-mRNA). In Escherichia coli (strain ATCC 8739 / DSM 1576 / NBRC 3972 / NCIMB 8545 / WDCM 00012 / Crooks), this protein is tRNA/tmRNA (uracil-C(5))-methyltransferase.